Reading from the N-terminus, the 147-residue chain is Large ribosomal subunit protein uL15 (147 aa).

Residues 1-20 (MTLRLNDLKPADGARTERTR) show a composition bias toward basic and acidic residues. Residues 1–61 (MTLRLNDLKP…GFEGGQTPMQ (61 aa)) are disordered. Over residues 23-33 (RGIGSGLGKTA) the composition is skewed to gly residues. Positions 34–47 (GRGHKGSFARKGGG) are enriched in basic residues.

Belongs to the universal ribosomal protein uL15 family. In terms of assembly, part of the 50S ribosomal subunit.

Functionally, binds to the 23S rRNA. This is Large ribosomal subunit protein uL15 from Xanthomonas euvesicatoria pv. vesicatoria (strain 85-10) (Xanthomonas campestris pv. vesicatoria).